A 357-amino-acid polypeptide reads, in one-letter code: D-alanine--D-alanine ligase (357 aa).

The 195-residue stretch at 145–339 (KEVMLYHGIQ…YGDLVMDIVN (195 aa)) folds into the ATP-grasp domain. 172–225 (PFDFPVVVKPTSGGSSVGTHIIHNQEELESGLEDVFRFDNSAIVEEFTPGREFS) serves as a coordination point for ATP. Residues D294, E306, and N308 each coordinate Mg(2+).

It belongs to the D-alanine--D-alanine ligase family. It depends on Mg(2+) as a cofactor. The cofactor is Mn(2+).

It is found in the cytoplasm. The enzyme catalyses 2 D-alanine + ATP = D-alanyl-D-alanine + ADP + phosphate + H(+). The protein operates within cell wall biogenesis; peptidoglycan biosynthesis. Cell wall formation. The polypeptide is D-alanine--D-alanine ligase (Lacticaseibacillus paracasei (strain ATCC 334 / BCRC 17002 / CCUG 31169 / CIP 107868 / KCTC 3260 / NRRL B-441) (Lactobacillus paracasei)).